We begin with the raw amino-acid sequence, 276 residues long: Large ribosomal subunit protein uL2 (276 aa).

The disordered stretch occupies residues 212 to 276; that stretch reads NRHRGIRPQT…KLIISRKKHK (65 aa). The segment covering 257 to 276 has biased composition (basic residues); the sequence is YKTRKKKASDKLIISRKKHK.

This sequence belongs to the universal ribosomal protein uL2 family. Part of the 50S ribosomal subunit. Forms a bridge to the 30S subunit in the 70S ribosome.

One of the primary rRNA binding proteins. Required for association of the 30S and 50S subunits to form the 70S ribosome, for tRNA binding and peptide bond formation. It has been suggested to have peptidyltransferase activity; this is somewhat controversial. Makes several contacts with the 16S rRNA in the 70S ribosome. This is Large ribosomal subunit protein uL2 from Helicobacter pylori (strain HPAG1).